A 98-amino-acid polypeptide reads, in one-letter code: Small ribosomal subunit protein bS20 (98 aa).

The span at 1 to 12 shows a compositional bias: basic residues; the sequence is MAPRKPSKKVGP. Positions 1 to 31 are disordered; sequence MAPRKPSKKVGPQKRPSAEKRVITSKKKQLR.

This sequence belongs to the bacterial ribosomal protein bS20 family.

Its function is as follows. Binds directly to 16S ribosomal RNA. The sequence is that of Small ribosomal subunit protein bS20 from Chlamydia trachomatis serovar A (strain ATCC VR-571B / DSM 19440 / HAR-13).